A 38-amino-acid chain; its full sequence is Large ribosomal subunit protein bL36 (38 aa).

This sequence belongs to the bacterial ribosomal protein bL36 family.

The chain is Large ribosomal subunit protein bL36 from Phytoplasma australiense.